The chain runs to 145 residues: ATP synthase epsilon chain (145 aa).

It belongs to the ATPase epsilon chain family. F-type ATPases have 2 components, CF(1) - the catalytic core - and CF(0) - the membrane proton channel. CF(1) has five subunits: alpha(3), beta(3), gamma(1), delta(1), epsilon(1). CF(0) has three main subunits: a, b and c.

The protein resides in the cell inner membrane. Produces ATP from ADP in the presence of a proton gradient across the membrane. This is ATP synthase epsilon chain from Francisella tularensis subsp. tularensis (strain FSC 198).